The primary structure comprises 207 residues: MATIFDILNTLNNNNFENCKRQCSTNKSNKTIIDILPPMDVTMTNDKLIIETELAGISKDQIEIDIKDSILTIQGEKKKNLNKQQQQLVIEKSSTSPSSSTLDSKENGPSIEEFEDDIKPKSTTSTTTVSTATTTKENKEDENKTKSSDKKFISERSFGNFKRYLDLTKVLYQLDLNSINTQFENGLLTITINKKLHYSNTIKININ.

Residues 30-207 (KTIIDILPPM…YSNTIKININ (178 aa)) form the sHSP domain. Composition is skewed to low complexity over residues 84-101 (QQQQ…SSST) and 122-135 (STTS…ATTT). The interval 84 to 149 (QQQQLVIEKS…EDENKTKSSD (66 aa)) is disordered. The span at 136–149 (KENKEDENKTKSSD) shows a compositional bias: basic and acidic residues.

Belongs to the small heat shock protein (HSP20) family.

This Dictyostelium discoideum (Social amoeba) protein is Small heat shock protein hspG7 (hspG7).